Here is a 527-residue protein sequence, read N- to C-terminus: Phosphoenolpyruvate carboxykinase (ATP) (527 aa).

Substrate contacts are provided by Arg56, Tyr192, and Lys198. Residues Lys198, His217, and 233 to 241 (GLSGTGKTT) contribute to the ATP site. Positions 198 and 217 each coordinate Mn(2+). Position 254 (Asp254) interacts with Mn(2+). ATP contacts are provided by Glu282, Arg319, and Thr444. Arg319 contributes to the substrate binding site.

Belongs to the phosphoenolpyruvate carboxykinase (ATP) family. Mn(2+) is required as a cofactor.

It localises to the cytoplasm. It catalyses the reaction oxaloacetate + ATP = phosphoenolpyruvate + ADP + CO2. Its pathway is carbohydrate biosynthesis; gluconeogenesis. In terms of biological role, involved in the gluconeogenesis. Catalyzes the conversion of oxaloacetate (OAA) to phosphoenolpyruvate (PEP) through direct phosphoryl transfer between the nucleoside triphosphate and OAA. This is Phosphoenolpyruvate carboxykinase (ATP) from Bacillus velezensis (strain DSM 23117 / BGSC 10A6 / LMG 26770 / FZB42) (Bacillus amyloliquefaciens subsp. plantarum).